The following is a 673-amino-acid chain: Kinesin-like protein KIFC1 (673 aa).

Serine 6, serine 26, serine 31, and serine 33 each carry phosphoserine. Disordered regions lie at residues 23-94 (KAPS…TGPR) and 109-136 (VPAV…KRPA). Polar residues predominate over residues 60–86 (TKITTSHPRVPSLTTVPQTQGQTTAQK). Residues 142-306 (QLCDLNAELK…RRRLHNQLQE (165 aa)) are a coiled coil. The 354-residue stretch at 310–663 (NIRVFCRVRP…LRFASKVNQC (354 aa)) folds into the Kinesin motor domain. A disordered region spans residues 325–372 (PTPPPGLLLFPSGPGGPSDPPTRLSLSRSDERRGTLSGAPAPPTRHDF). A Phosphothreonine modification is found at threonine 359. 410 to 417 (GQTGSGKT) lines the ATP pocket.

This sequence belongs to the TRAFAC class myosin-kinesin ATPase superfamily. Kinesin family. NCD subfamily. In terms of assembly, binds NUBP1 and NUBP2. Interacts with PPP1R42.

It localises to the nucleus. The protein resides in the cytoplasm. It is found in the cytoskeleton. Its subcellular location is the microtubule organizing center. The protein localises to the centrosome. It localises to the spindle. The protein resides in the early endosome. Minus end-directed microtubule-dependent motor required for bipolar spindle formation. May contribute to movement of early endocytic vesicles. Regulates cilium formation and structure. This Homo sapiens (Human) protein is Kinesin-like protein KIFC1 (KIFC1).